Consider the following 708-residue polypeptide: Polyribonucleotide nucleotidyltransferase (708 aa).

Mg(2+)-binding residues include aspartate 490 and aspartate 496. The KH domain occupies 557–619; sequence PRIETMTIPK…KSIDDAIRLI (63 aa). The S1 motif domain maps to 629 to 699; the sequence is GEVYKGKVRS…KTGKFKLSRK (71 aa).

This sequence belongs to the polyribonucleotide nucleotidyltransferase family. Mg(2+) serves as cofactor.

It is found in the cytoplasm. The enzyme catalyses RNA(n+1) + phosphate = RNA(n) + a ribonucleoside 5'-diphosphate. Involved in mRNA degradation. Catalyzes the phosphorolysis of single-stranded polyribonucleotides processively in the 3'- to 5'-direction. The chain is Polyribonucleotide nucleotidyltransferase from Bacteroides fragilis (strain ATCC 25285 / DSM 2151 / CCUG 4856 / JCM 11019 / LMG 10263 / NCTC 9343 / Onslow / VPI 2553 / EN-2).